The sequence spans 345 residues: Phenylalanine--tRNA ligase alpha subunit (345 aa).

Residue Glu-253 coordinates Mg(2+).

It belongs to the class-II aminoacyl-tRNA synthetase family. Phe-tRNA synthetase alpha subunit type 1 subfamily. As to quaternary structure, tetramer of two alpha and two beta subunits. Mg(2+) serves as cofactor.

The protein resides in the cytoplasm. It carries out the reaction tRNA(Phe) + L-phenylalanine + ATP = L-phenylalanyl-tRNA(Phe) + AMP + diphosphate + H(+). This Nitratidesulfovibrio vulgaris (strain DSM 19637 / Miyazaki F) (Desulfovibrio vulgaris) protein is Phenylalanine--tRNA ligase alpha subunit.